A 517-amino-acid chain; its full sequence is Shugoshin 1 (517 aa).

Residues 1–89 (MAKERCQKRS…DVILQLRKEC (89 aa)) are a coiled coil. Residues 1-176 (MAKERCQKRS…DFDSGKVEST (176 aa)) are necessary for interaction with PPP2CA and PPP2R1A. Disordered regions lie at residues 107-136 (QSEE…LSGK), 149-173 (PYQT…SGKV), 267-317 (PEQI…TLDG), and 334-427 (HPTP…QESP). Residues 268–291 (EQIESKHKRARKRRAEQRRTKQRC) are a coiled coil. Basic residues predominate over residues 273–302 (KHKRARKRRAEQRRTKQRCKSKSSLRSKGN). Positions 341–363 (KMNNGCNKETDSSNSEVSDLECS) are enriched in polar residues. A compositionally biased stretch (basic and acidic residues) spans 379 to 390 (RLRDYRESERAV). At serine 426 the chain carries Phosphoserine. The PXVXL/I motif signature appears at 441-445 (PRVKI). Positions 447-455 (KPSLPPKRR) match the D-box motif. Serine 497 bears the Phosphoserine; by NEK2 mark.

The protein belongs to the shugoshin family. In terms of assembly, interacts with PPP2CA (or PPP2CB), PPP2R1B, PPP2R5A, PPP2R5B, PPP2R5C, PPP2R5D, PPP2R5E, SET, LRRC59, RBM10 (or RBM5), RPL10A, RPL28, RPL7, RPL7A and RPLP1. Interaction with protein phosphatase 2A occurs most probably through direct binding to the regulatory B56 subunits: PPP2R1B, PPP2R5A, PPP2R5B, PPP2R5C, PPP2R5D, PPP2R5E. Interacts with PPP2R1A and NEK2. Interacts with CDCA8. In terms of processing, ubiquitinated and degraded during mitotic exit by APC/C-Cdh1. Post-translationally, phosphorylation by NEK2 is essential for chromosome congression in mitosis and for the proper attachment of spindle microtubule to the kinetochore. Phosphorylated by PLK1 and AUKRB. Ubiquitously expressed in proliferating cells. Moderately expressed in the oocytes.

The protein resides in the nucleus. The protein localises to the chromosome. Its subcellular location is the centromere. It localises to the kinetochore. It is found in the cytoplasm. The protein resides in the cytoskeleton. The protein localises to the spindle pole. Its subcellular location is the microtubule organizing center. It localises to the centrosome. It is found in the nucleus speckle. Plays a central role in chromosome cohesion during mitosis by preventing premature dissociation of cohesin complex from centromeres after prophase, when most of cohesin complex dissociates from chromosomes arms. May act by preventing phosphorylation of the STAG2 subunit of cohesin complex at the centromere, ensuring cohesin persistence at centromere until cohesin cleavage by ESPL1/separase at anaphase. Essential for proper chromosome segregation during mitosis and this function requires interaction with PPP2R1A. Its phosphorylated form is necessary for chromosome congression and for the proper attachment of spindle microtubule to the kinetochore. Necessary for kinetochore localization of PLK1 and CENPF. May play a role in the tension sensing mechanism of the spindle-assembly checkpoint by regulating PLK1 kinetochore affinity. Involved in centromeric enrichment of AUKRB in prometaphase. In Mus musculus (Mouse), this protein is Shugoshin 1.